Here is a 693-residue protein sequence, read N- to C-terminus: Methionine--tRNA ligase (693 aa).

The short motif at 12–22 (PYANGPLHLGH) is the 'HIGH' region element. Residues C143, C146, C156, and C159 each coordinate Zn(2+). The 'KMSKS' region signature appears at 330-334 (KMSKS). Residue K333 participates in ATP binding. Residues 557–576 (APTAKNEAAKPAAPAAAKTE) form a disordered region. One can recognise a tRNA-binding domain in the interval 590 to 693 (DFAKLDLRIG…SGAQPGMPVR (104 aa)).

This sequence belongs to the class-I aminoacyl-tRNA synthetase family. MetG type 1 subfamily. As to quaternary structure, homodimer. The cofactor is Zn(2+).

It is found in the cytoplasm. It carries out the reaction tRNA(Met) + L-methionine + ATP = L-methionyl-tRNA(Met) + AMP + diphosphate. Its function is as follows. Is required not only for elongation of protein synthesis but also for the initiation of all mRNA translation through initiator tRNA(fMet) aminoacylation. This is Methionine--tRNA ligase from Stenotrophomonas maltophilia (strain R551-3).